The sequence spans 280 residues: Bicarbonate transport system permease protein CmpB (280 aa).

The next 7 membrane-spanning stretches (helical) occupy residues 32–52 (PIFGILGFLLLWQLISSAGLI), 99–119 (YSLAAIVGISTGILVGTQPLL), 126–146 (IFQFLRMVAPLAWVPIALVAL), 153–173 (AIFVIFITSVWPILINTTEGV), 198–218 (ILIPSALPYIFTGLRIAIGLA), 219–239 (WLAIIAAEIVMSGIVGIGFFI), and 251–271 (IILAVFYIGAVGLLLDRGIAY). An ABC transmembrane type-1 domain is found at 88–266 (TLASLGRVAQ…YIGAVGLLLD (179 aa)).

Belongs to the binding-protein-dependent transport system permease family. The complex is composed of two ATP-binding proteins (CmpC and CmpD), a transmembrane protein (CmpB) and a solute-binding protein (CmpA).

It localises to the cell inner membrane. In terms of biological role, part of the ABC transporter complex CmpABCD involved in bicarbonate transport. Probably responsible for the translocation of the substrate across the membrane. The chain is Bicarbonate transport system permease protein CmpB (cmpB) from Synechocystis sp. (strain ATCC 27184 / PCC 6803 / Kazusa).